Consider the following 36-residue polypeptide: Neurotoxin PRTx26An0C3 (36 aa).

Cystine bridges form between cysteine 3–cysteine 17, cysteine 10–cysteine 22, and cysteine 16–cysteine 34.

Expressed by the venom gland.

It localises to the secreted. Functionally, neurotoxin. Causes spastic paralysis and death in mice. Moderate inhibitor of L-type calcium channels (Cav1/CACNA1). The sequence is that of Neurotoxin PRTx26An0C3 from Phoneutria nigriventer (Brazilian armed spider).